A 188-amino-acid polypeptide reads, in one-letter code: MPVADTSQLISGVAERYASSLFELALEAGSIEAVGADLTRIQALIDGSADLKRLIVSPVFSADDQYKAISALVEKFGVSGLVGNFLKVVARNRRLFVLPGIIRAFRLLAARHKGEITADVTSAHALTPAQETELKAALKGVTGKDVAVNVTVDPSILGGLIVKVGSRQIDTSLRTKLSTLKLALKEVG.

The protein belongs to the ATPase delta chain family. In terms of assembly, F-type ATPases have 2 components, F(1) - the catalytic core - and F(0) - the membrane proton channel. F(1) has five subunits: alpha(3), beta(3), gamma(1), delta(1), epsilon(1). F(0) has three main subunits: a(1), b(2) and c(10-14). The alpha and beta chains form an alternating ring which encloses part of the gamma chain. F(1) is attached to F(0) by a central stalk formed by the gamma and epsilon chains, while a peripheral stalk is formed by the delta and b chains.

Its subcellular location is the cell inner membrane. Its function is as follows. F(1)F(0) ATP synthase produces ATP from ADP in the presence of a proton or sodium gradient. F-type ATPases consist of two structural domains, F(1) containing the extramembraneous catalytic core and F(0) containing the membrane proton channel, linked together by a central stalk and a peripheral stalk. During catalysis, ATP synthesis in the catalytic domain of F(1) is coupled via a rotary mechanism of the central stalk subunits to proton translocation. This protein is part of the stalk that links CF(0) to CF(1). It either transmits conformational changes from CF(0) to CF(1) or is implicated in proton conduction. The chain is ATP synthase subunit delta from Sinorhizobium medicae (strain WSM419) (Ensifer medicae).